The primary structure comprises 205 residues: Putative 3-methyladenine DNA glycosylase (205 aa).

This sequence belongs to the DNA glycosylase MPG family.

The sequence is that of Putative 3-methyladenine DNA glycosylase from Bacillus cereus (strain ATCC 10987 / NRS 248).